The sequence spans 420 residues: Glutamate-1-semialdehyde 2,1-aminomutase (420 aa).

An N6-(pyridoxal phosphate)lysine modification is found at Lys-261.

It belongs to the class-III pyridoxal-phosphate-dependent aminotransferase family. HemL subfamily. Pyridoxal 5'-phosphate serves as cofactor.

The protein localises to the cytoplasm. It catalyses the reaction (S)-4-amino-5-oxopentanoate = 5-aminolevulinate. It participates in porphyrin-containing compound metabolism; protoporphyrin-IX biosynthesis; 5-aminolevulinate from L-glutamyl-tRNA(Glu): step 2/2. The polypeptide is Glutamate-1-semialdehyde 2,1-aminomutase (Thermoplasma volcanium (strain ATCC 51530 / DSM 4299 / JCM 9571 / NBRC 15438 / GSS1)).